Consider the following 505-residue polypeptide: ATP synthase subunit beta (505 aa).

158–165 (GGAGVGKT) is an ATP binding site.

The protein belongs to the ATPase alpha/beta chains family. As to quaternary structure, F-type ATPases have 2 components, CF(1) - the catalytic core - and CF(0) - the membrane proton channel. CF(1) has five subunits: alpha(3), beta(3), gamma(1), delta(1), epsilon(1). CF(0) has three main subunits: a(1), b(2) and c(9-12). The alpha and beta chains form an alternating ring which encloses part of the gamma chain. CF(1) is attached to CF(0) by a central stalk formed by the gamma and epsilon chains, while a peripheral stalk is formed by the delta and b chains.

The protein localises to the cell inner membrane. The catalysed reaction is ATP + H2O + 4 H(+)(in) = ADP + phosphate + 5 H(+)(out). Produces ATP from ADP in the presence of a proton gradient across the membrane. The catalytic sites are hosted primarily by the beta subunits. The protein is ATP synthase subunit beta of Parabacteroides distasonis (strain ATCC 8503 / DSM 20701 / CIP 104284 / JCM 5825 / NCTC 11152).